The sequence spans 417 residues: NADH-quinone oxidoreductase subunit D (417 aa).

It belongs to the complex I 49 kDa subunit family. NDH-1 is composed of 14 different subunits. Subunits NuoB, C, D, E, F, and G constitute the peripheral sector of the complex.

The protein localises to the cell inner membrane. It carries out the reaction a quinone + NADH + 5 H(+)(in) = a quinol + NAD(+) + 4 H(+)(out). Its function is as follows. NDH-1 shuttles electrons from NADH, via FMN and iron-sulfur (Fe-S) centers, to quinones in the respiratory chain. The immediate electron acceptor for the enzyme in this species is believed to be ubiquinone. Couples the redox reaction to proton translocation (for every two electrons transferred, four hydrogen ions are translocated across the cytoplasmic membrane), and thus conserves the redox energy in a proton gradient. This chain is NADH-quinone oxidoreductase subunit D, found in Burkholderia vietnamiensis (strain G4 / LMG 22486) (Burkholderia cepacia (strain R1808)).